A 169-amino-acid chain; its full sequence is Cell division inhibitor SulA (169 aa).

The segment at 106–112 (ALRTGNY) is ftsZ binding. The segment at 162 to 169 (KIHSNLYH) is lon protease binding.

The protein belongs to the SulA family. In terms of assembly, interacts with FtsZ. Is rapidly cleaved and degraded by the Lon protease once DNA damage is repaired.

Its function is as follows. Component of the SOS system and an inhibitor of cell division. Accumulation of SulA causes rapid cessation of cell division and the appearance of long, non-septate filaments. In the presence of GTP, binds a polymerization-competent form of FtsZ in a 1:1 ratio, thus inhibiting FtsZ polymerization and therefore preventing it from participating in the assembly of the Z ring. This mechanism prevents the premature segregation of damaged DNA to daughter cells during cell division. This chain is Cell division inhibitor SulA, found in Salmonella choleraesuis (strain SC-B67).